The following is a 570-amino-acid chain: Berberine bridge enzyme-like 19 (570 aa).

Positions methionine 1–serine 30 are cleaved as a signal peptide. A disulfide bridge links cysteine 42 with cysteine 105. Residue asparagine 80 is glycosylated (N-linked (GlcNAc...) asparagine). Residues serine 83 to valine 257 enclose the FAD-binding PCMH-type domain. Residues histidine 120–cysteine 182 constitute a cross-link (6-(S-cysteinyl)-8alpha-(pros-histidyl)-FAD (His-Cys)). N-linked (GlcNAc...) asparagine glycosylation is found at asparagine 341 and asparagine 359.

This sequence belongs to the oxygen-dependent FAD-linked oxidoreductase family. The cofactor is FAD. The FAD cofactor is bound via a bicovalent 6-S-cysteinyl, 8alpha-N1-histidyl FAD linkage.

It is found in the secreted. The protein resides in the cell wall. The polypeptide is Berberine bridge enzyme-like 19 (Arabidopsis thaliana (Mouse-ear cress)).